Consider the following 143-residue polypeptide: Large-conductance mechanosensitive channel (143 aa).

A run of 2 helical transmembrane segments spans residues 10–30 (FAVK…GAFS) and 89–109 (GSFI…FLMV).

Belongs to the MscL family. Homopentamer.

Its subcellular location is the cell inner membrane. Its function is as follows. Channel that opens in response to stretch forces in the membrane lipid bilayer. May participate in the regulation of osmotic pressure changes within the cell. The chain is Large-conductance mechanosensitive channel from Burkholderia cenocepacia (strain ATCC BAA-245 / DSM 16553 / LMG 16656 / NCTC 13227 / J2315 / CF5610) (Burkholderia cepacia (strain J2315)).